The chain runs to 282 residues: Ribosomal RNA small subunit methyltransferase A (282 aa).

Residues His15, Leu17, Gly42, Glu64, Asp89, and Asn109 each contribute to the S-adenosyl-L-methionine site.

The protein belongs to the class I-like SAM-binding methyltransferase superfamily. rRNA adenine N(6)-methyltransferase family. RsmA subfamily.

The protein resides in the cytoplasm. It carries out the reaction adenosine(1518)/adenosine(1519) in 16S rRNA + 4 S-adenosyl-L-methionine = N(6)-dimethyladenosine(1518)/N(6)-dimethyladenosine(1519) in 16S rRNA + 4 S-adenosyl-L-homocysteine + 4 H(+). Its function is as follows. Specifically dimethylates two adjacent adenosines (A1518 and A1519) in the loop of a conserved hairpin near the 3'-end of 16S rRNA in the 30S particle. May play a critical role in biogenesis of 30S subunits. In Prochlorococcus marinus (strain MIT 9211), this protein is Ribosomal RNA small subunit methyltransferase A.